The chain runs to 429 residues: Enolase (429 aa).

Position 163 (Gln163) interacts with (2R)-2-phosphoglycerate. Glu205 (proton donor) is an active-site residue. The Mg(2+) site is built by Asp242, Glu285, and Asp312. Residues Lys337, Arg366, Ser367, and Lys388 each coordinate (2R)-2-phosphoglycerate. The active-site Proton acceptor is Lys337.

It belongs to the enolase family. The cofactor is Mg(2+).

Its subcellular location is the cytoplasm. It localises to the secreted. The protein localises to the cell surface. It carries out the reaction (2R)-2-phosphoglycerate = phosphoenolpyruvate + H2O. Its pathway is carbohydrate degradation; glycolysis; pyruvate from D-glyceraldehyde 3-phosphate: step 4/5. Its function is as follows. Catalyzes the reversible conversion of 2-phosphoglycerate (2-PG) into phosphoenolpyruvate (PEP). It is essential for the degradation of carbohydrates via glycolysis. The protein is Enolase of Methylorubrum extorquens (strain PA1) (Methylobacterium extorquens).